Consider the following 106-residue polypeptide: Acylphosphatase-2 (106 aa).

One can recognise an Acylphosphatase-like domain in the interval 16-106 (SVDYEVFGTV…LEYSDFSIRY (91 aa)). Active-site residues include arginine 31 and asparagine 49. Serine 100 carries the post-translational modification Phosphoserine.

Belongs to the acylphosphatase family.

The catalysed reaction is an acyl phosphate + H2O = a carboxylate + phosphate + H(+). The polypeptide is Acylphosphatase-2 (Acyp2) (Mus musculus (Mouse)).